Here is a 68-residue protein sequence, read N- to C-terminus: U-actitoxin-Avt1 (68 aa).

The signal sequence occupies residues 1-22 (MNSKAIISVFLIMLVVVSCTQA). A propeptide spanning residues 23–40 (TYETEDDDEPGPRHSEKR) is cleaved from the precursor. The segment at 24-50 (YETEDDDEPGPRHSEKRSCARGCGGDS) is disordered. Positions 32-41 (PGPRHSEKRS) are enriched in basic and acidic residues. Intrachain disulfides connect cysteine 42/cysteine 54, cysteine 46/cysteine 59, and cysteine 52/cysteine 66.

In terms of biological role, stable protein with probable toxin activity. Does not show activity on all channels tested. Shows no hemolytic activity on rat erythrocytes. This is U-actitoxin-Avt1 from Aulactinia veratra (Green snakelock anemone).